The sequence spans 207 residues: Small ribosomal subunit protein uS4 (207 aa).

The segment at 31-54 is disordered; that stretch reads KCKLDTKPGQHGRTSGSRTSDYGN. Polar residues predominate over residues 42-53; it reads GRTSGSRTSDYG. An S4 RNA-binding domain is found at 97–158; sequence SRLDNVVYRM…KAKKQARITE (62 aa).

Belongs to the universal ribosomal protein uS4 family. As to quaternary structure, part of the 30S ribosomal subunit. Contacts protein S5. The interaction surface between S4 and S5 is involved in control of translational fidelity.

Its function is as follows. One of the primary rRNA binding proteins, it binds directly to 16S rRNA where it nucleates assembly of the body of the 30S subunit. Functionally, with S5 and S12 plays an important role in translational accuracy. This is Small ribosomal subunit protein uS4 from Polynucleobacter asymbioticus (strain DSM 18221 / CIP 109841 / QLW-P1DMWA-1) (Polynucleobacter necessarius subsp. asymbioticus).